Reading from the N-terminus, the 209-residue chain is Large ribosomal subunit protein uL3 (209 aa).

Residues 144–165 form a disordered region; sequence GSMGAASDPSRTFKNKKMPGHM.

Belongs to the universal ribosomal protein uL3 family. Part of the 50S ribosomal subunit. Forms a cluster with proteins L14 and L19.

Its function is as follows. One of the primary rRNA binding proteins, it binds directly near the 3'-end of the 23S rRNA, where it nucleates assembly of the 50S subunit. The polypeptide is Large ribosomal subunit protein uL3 (Clostridium novyi (strain NT)).